A 259-amino-acid chain; its full sequence is Ribonuclease HII (259 aa).

An RNase H type-2 domain is found at 70–258; the sequence is TLIVGIDEVG…VKSLVLGKKE (189 aa). A divalent metal cation contacts are provided by Asp76, Glu77, and Asp168.

Belongs to the RNase HII family. Requires Mn(2+) as cofactor. It depends on Mg(2+) as a cofactor.

The protein localises to the cytoplasm. It carries out the reaction Endonucleolytic cleavage to 5'-phosphomonoester.. Its function is as follows. Endonuclease that specifically degrades the RNA of RNA-DNA hybrids. In Streptococcus pneumoniae serotype 2 (strain D39 / NCTC 7466), this protein is Ribonuclease HII.